The chain runs to 543 residues: UPF0324 membrane protein RB9488 (543 aa).

Residues 1-22 (MNSNTPSSDNSSPDNVSPDTSD) show a composition bias toward low complexity. The segment at 1 to 41 (MNSNTPSSDNSSPDNVSPDTSDMASAGDDSALATPPPRPSL) is disordered. Residues 51 to 73 (WWAIWCAALLLLIAFAAVWIGQP) traverse the membrane as a helical segment. Residues 91–120 (VETAPENAGPSAEAENEAIETENTAPAENA) are disordered. 11 consecutive transmembrane segments (helical) span residues 160-182 (ISSSWSGILGVFLIIAALFAFAN), 189-211 (AGAFLAAFPVIFLLATLAYWMSG), 221-243 (EYALWALLVGLIISNTVGTPDFL), 270-292 (LALGLPGVFVAWLVTPVVLITTY), 307-329 (NMVISADMSVCGVSAAIATAAAC), 336-358 (LSLSIGLSLGFTVIMMAVMPAVI), 368-390 (GGAWLGGTIDSTGAVAAAGAVLG), 403-422 (IQNILIGVTAFCVAIYWVTF), 437-459 (IWYRFPKFVLGFVSMSILFSILY), 479-496 (TLRGWFFCLAFVSIGLET), and 511-533 (LVLYVCGQSLNLVLTLVMAYLMF).

This sequence belongs to the UPF0324 family.

The protein localises to the cell membrane. The sequence is that of UPF0324 membrane protein RB9488 from Rhodopirellula baltica (strain DSM 10527 / NCIMB 13988 / SH1).